A 196-amino-acid polypeptide reads, in one-letter code: Gastrula zinc finger protein xLCGF3.1 (196 aa).

7 consecutive C2H2-type zinc fingers follow at residues 6–28 (FMCTKCGKCLSTKQKLNLHHMTH), 34–56 (FTCTECGKGFSRNDYLKIHQTIH), 62–84 (FTCIECGKGFSINRTLKLHYMTH), 90–112 (FTCTECSKGFSTKRDLEIHQTMH), 118–140 (LTCTECSKGFSTKHKLSIHQRVH), 146–168 (FTCTECNKGFSRNDHLQIHQTVH), and 174–196 (FTCTECSKCFSRKELLKIHQIVH).

Belongs to the krueppel C2H2-type zinc-finger protein family.

It localises to the nucleus. In terms of biological role, may be involved in transcriptional regulation. The polypeptide is Gastrula zinc finger protein xLCGF3.1 (Xenopus laevis (African clawed frog)).